Here is a 179-residue protein sequence, read N- to C-terminus: Cellular nucleic acid-binding protein homolog (179 aa).

CCHC-type zinc fingers lie at residues 17-34 (PRCY…ECTK), 36-53 (SICY…ECTE), 58-75 (KTCY…DCPS), 83-100 (AECY…DCRT), 116-133 (MNCY…DCTM), 135-152 (VKCY…ECQQ), and 157-174 (QLCY…NCTS).

The protein to human CNBP and to retroviral nucleic acid binding proteins (NBP). Post-translationally, phosphorylated.

The protein localises to the nucleus. Its function is as follows. Acts in the sexual differentiation pathway. Is required for efficient conjugation. Double-stranded DNA-binding protein. The sequence is that of Cellular nucleic acid-binding protein homolog (byr3) from Schizosaccharomyces pombe (strain 972 / ATCC 24843) (Fission yeast).